A 372-amino-acid polypeptide reads, in one-letter code: Bifunctional enzyme IspD/IspF (372 aa).

The interval 1-210 is 2-C-methyl-D-erythritol 4-phosphate cytidylyltransferase; sequence MLDLSLIMLG…LNLNSPSNDI (210 aa). The interval 211 to 372 is 2-C-methyl-D-erythritol 2,4-cyclodiphosphate synthase; the sequence is FCGNGFDVHA…LKYFNWRNVL (162 aa). The a divalent metal cation site is built by Asp217 and His219. Residues 217 to 219 and 243 to 244 each bind 4-CDP-2-C-methyl-D-erythritol 2-phosphate; these read DVH and HS. His251 is an a divalent metal cation binding site. 4-CDP-2-C-methyl-D-erythritol 2-phosphate contacts are provided by residues 265–267, 270–274, 341–344, Phe348, and Arg351; these read DIG, YPDND, and TTTE.

This sequence in the N-terminal section; belongs to the IspD/TarI cytidylyltransferase family. IspD subfamily. In the C-terminal section; belongs to the IspF family. The cofactor is a divalent metal cation.

It carries out the reaction 2-C-methyl-D-erythritol 4-phosphate + CTP + H(+) = 4-CDP-2-C-methyl-D-erythritol + diphosphate. The catalysed reaction is 4-CDP-2-C-methyl-D-erythritol 2-phosphate = 2-C-methyl-D-erythritol 2,4-cyclic diphosphate + CMP. It functions in the pathway isoprenoid biosynthesis; isopentenyl diphosphate biosynthesis via DXP pathway; isopentenyl diphosphate from 1-deoxy-D-xylulose 5-phosphate: step 2/6. The protein operates within isoprenoid biosynthesis; isopentenyl diphosphate biosynthesis via DXP pathway; isopentenyl diphosphate from 1-deoxy-D-xylulose 5-phosphate: step 4/6. Bifunctional enzyme that catalyzes the formation of 4-diphosphocytidyl-2-C-methyl-D-erythritol from CTP and 2-C-methyl-D-erythritol 4-phosphate (MEP) (IspD), and catalyzes the conversion of 4-diphosphocytidyl-2-C-methyl-D-erythritol 2-phosphate (CDP-ME2P) to 2-C-methyl-D-erythritol 2,4-cyclodiphosphate (ME-CPP) with a corresponding release of cytidine 5-monophosphate (CMP) (IspF). This is Bifunctional enzyme IspD/IspF from Campylobacter fetus subsp. fetus (strain 82-40).